The chain runs to 1095 residues: Actin cross-linking toxin VgrG1 (1095 aa).

One can recognise an ACD domain in the interval 712 to 1095 (TPDFPTHFPK…TVIQQVESLV (384 aa)). Position 723-727 (723-727 (SIGIE)) interacts with ATP. Mg(2+)-binding residues include E727 and E789. S792 is a binding site for ATP. Q873 is a Mg(2+) binding site. R979 serves as a coordination point for ATP. E1050 provides a ligand contact to Mg(2+).

It belongs to the VgrG protein family. Interacts with protein VC1417. Mg(2+) serves as cofactor.

The protein localises to the secreted. It is found in the host cytoplasm. Its subcellular location is the host cytosol. Functionally, part of the type VI secretion system (T6SS) specialized secretion system, which delivers several virulence factors in both prokaryotic and eukaryotic cells during infection. Forms the spike at the tip of the elongating tube probably formed by hemolysin co-regulated protein/Hcp. Allows the delivery of the TseL antibacterial toxin to target cells where it exerts its toxicity. Also acts directly as an actin-directed toxin that catalyzes the covalent cross-linking of host cytoplasmic monomeric actin. Mediates the cross-link between 'Lys-50' of one monomer and 'Glu-270' of another actin monomer, resulting in formation of highly toxic actin oligomers that cause cell rounding. The toxin can be highly efficient at very low concentrations by acting on formin homology family proteins: toxic actin oligomers bind with high affinity to formins and adversely affect both nucleation and elongation abilities of formins, causing their potent inhibition in both profilin-dependent and independent manners. Acts as an acid--amino-acid ligase that transfers the gamma-phosphoryl group of ATP to the 'Glu-270' actin residue, resulting in the formation of an activated acyl phosphate intermediate. This intermediate is further hydrolyzed and the energy of hydrolysis is utilized for the formation of the amide bond between actin subunits. This is Actin cross-linking toxin VgrG1 from Vibrio cholerae serotype O1 (strain ATCC 39541 / Classical Ogawa 395 / O395).